The sequence spans 202 residues: Small ribosomal subunit protein uS4 (202 aa).

The disordered stretch occupies residues 18 to 42 (LPGLTRKAAKRSYPPGQHGQARRKR). The region spanning 90–152 (NRLDNVCFRL…KPSKKLAETN (63 aa)) is the S4 RNA-binding domain.

This sequence belongs to the universal ribosomal protein uS4 family. Part of the 30S ribosomal subunit. Contacts protein S5. The interaction surface between S4 and S5 is involved in control of translational fidelity.

Its function is as follows. One of the primary rRNA binding proteins, it binds directly to 16S rRNA where it nucleates assembly of the body of the 30S subunit. Functionally, with S5 and S12 plays an important role in translational accuracy. This chain is Small ribosomal subunit protein uS4, found in Synechococcus sp. (strain RCC307).